Here is a 463-residue protein sequence, read N- to C-terminus: Probable Xaa-Pro aminopeptidase pepP (463 aa).

Residues D259, D270, E393, and E433 each coordinate Mn(2+).

The protein belongs to the peptidase M24B family. Mn(2+) is required as a cofactor.

It carries out the reaction Release of any N-terminal amino acid, including proline, that is linked to proline, even from a dipeptide or tripeptide.. Its function is as follows. Catalyzes the removal of a penultimate prolyl residue from the N-termini of peptides. This Pyrenophora teres f. teres (strain 0-1) (Barley net blotch fungus) protein is Probable Xaa-Pro aminopeptidase pepP (pepP).